Reading from the N-terminus, the 314-residue chain is Aspartate carbamoyltransferase catalytic subunit (314 aa).

Carbamoyl phosphate contacts are provided by Arg-58 and Thr-59. Position 86 (Lys-86) interacts with L-aspartate. The carbamoyl phosphate site is built by Arg-108, His-136, and Gln-139. L-aspartate contacts are provided by Arg-169 and Arg-223. Residues Gly-264 and Pro-265 each contribute to the carbamoyl phosphate site.

Belongs to the aspartate/ornithine carbamoyltransferase superfamily. ATCase family. As to quaternary structure, heterododecamer (2C3:3R2) of six catalytic PyrB chains organized as two trimers (C3), and six regulatory PyrI chains organized as three dimers (R2).

The enzyme catalyses carbamoyl phosphate + L-aspartate = N-carbamoyl-L-aspartate + phosphate + H(+). It functions in the pathway pyrimidine metabolism; UMP biosynthesis via de novo pathway; (S)-dihydroorotate from bicarbonate: step 2/3. In terms of biological role, catalyzes the condensation of carbamoyl phosphate and aspartate to form carbamoyl aspartate and inorganic phosphate, the committed step in the de novo pyrimidine nucleotide biosynthesis pathway. The protein is Aspartate carbamoyltransferase catalytic subunit of Jannaschia sp. (strain CCS1).